Consider the following 1503-residue polypeptide: Dynein axonemal assembly factor 1 homolog (1503 aa).

LRR repeat units lie at residues 34 to 56 (RLNDVLYLHYQGFQCIENLEEYT), 57 to 78 (ELKCLWLECNAISEIQGLEKLG), 79 to 100 (KLKCLFLQNNLITKIENLDPCR), 101 to 122 (ELDTLNLSSNHIRKIQNIGTNI), 125 to 146 (VLNTLTIASNYLKDSDSLSDLI), and 150 to 171 (TLSVLDLSNNRIDDILIVKIFE). One can recognise an LRRCT domain in the interval 185-223 (PVVSRLPQYRKTLILACKELTYLDSRPVFPRDRACAEAW). Disordered stretches follow at residues 249 to 280 (SINCTIRMRNSHRPPDQQDPLLRSSDSEDDTC), 305 to 328 (EQPISDHGTSTSSSVEDKDGTSSQ), 956 to 1033 (DSGD…DHDE), and 1295 to 1315 (STNNHSFSTKKTLPTKTSTSE). Residues 973 to 985 (TESEDYDTAEDEY) are compositionally biased toward acidic residues. Basic and acidic residues predominate over residues 1014–1031 (QKQDKPDTVEEVGKKNDH). Positions 1303 to 1314 (TKKTLPTKTSTS) are enriched in low complexity.

This sequence belongs to the DNAAF1 family.

The protein resides in the cell projection. The protein localises to the cilium. Its function is as follows. Cilium-specific protein required for cilia structures. The polypeptide is Dynein axonemal assembly factor 1 homolog (dtr) (Drosophila erecta (Fruit fly)).